Here is a 680-residue protein sequence, read N- to C-terminus: tRNA 5-methylaminomethyl-2-thiouridine biosynthesis bifunctional protein MnmC (680 aa).

The interval 1-267 (MTAEPNKPCQ…MAAILSSDAP (267 aa)) is tRNA (mnm(5)s(2)U34)-methyltransferase. The interval 273–680 (IGGGLASAHL…LRKLLKGKSL (408 aa)) is FAD-dependent cmnm(5)s(2)U34 oxidoreductase.

The protein in the N-terminal section; belongs to the methyltransferase superfamily. tRNA (mnm(5)s(2)U34)-methyltransferase family. In the C-terminal section; belongs to the DAO family. FAD is required as a cofactor.

Its subcellular location is the cytoplasm. The enzyme catalyses 5-aminomethyl-2-thiouridine(34) in tRNA + S-adenosyl-L-methionine = 5-methylaminomethyl-2-thiouridine(34) in tRNA + S-adenosyl-L-homocysteine + H(+). Catalyzes the last two steps in the biosynthesis of 5-methylaminomethyl-2-thiouridine (mnm(5)s(2)U) at the wobble position (U34) in tRNA. Catalyzes the FAD-dependent demodification of cmnm(5)s(2)U34 to nm(5)s(2)U34, followed by the transfer of a methyl group from S-adenosyl-L-methionine to nm(5)s(2)U34, to form mnm(5)s(2)U34. The protein is tRNA 5-methylaminomethyl-2-thiouridine biosynthesis bifunctional protein MnmC of Shewanella sp. (strain W3-18-1).